Consider the following 174-residue polypeptide: Adenine phosphoribosyltransferase (174 aa).

It belongs to the purine/pyrimidine phosphoribosyltransferase family. In terms of assembly, homodimer.

The protein localises to the cytoplasm. It catalyses the reaction AMP + diphosphate = 5-phospho-alpha-D-ribose 1-diphosphate + adenine. Its pathway is purine metabolism; AMP biosynthesis via salvage pathway; AMP from adenine: step 1/1. In terms of biological role, catalyzes a salvage reaction resulting in the formation of AMP, that is energically less costly than de novo synthesis. The protein is Adenine phosphoribosyltransferase of Nitrosomonas europaea (strain ATCC 19718 / CIP 103999 / KCTC 2705 / NBRC 14298).